The following is a 961-amino-acid chain: Vitamin B12-dependent ribonucleotide reductase (961 aa).

Residues 1-23 form a disordered region; sequence MTETTSGPARGSRTKGTKATKGL. Residues S143, 159–160, G188, 364–368, and 554–558 contribute to the substrate site; these read AC, NPCSE, and PTGTI. C160 and C377 are joined by a disulfide. The active-site Proton acceptor is the N364. C366 (cysteine radical intermediate) is an active-site residue. E368 acts as the Proton acceptor in catalysis.

The protein belongs to the ribonucleoside diphosphate reductase class-2 family. In terms of assembly, homotetramer. The cofactor is adenosylcob(III)alamin.

The catalysed reaction is a 2'-deoxyribonucleoside 5'-diphosphate + [thioredoxin]-disulfide + H2O = a ribonucleoside 5'-diphosphate + [thioredoxin]-dithiol. In terms of biological role, catalyzes the reduction of ribonucleotides to deoxyribonucleotides. May function to provide a pool of deoxyribonucleotide precursors for DNA repair during oxygen limitation and/or for immediate growth after restoration of oxygen. This is Vitamin B12-dependent ribonucleotide reductase (nrdJ) from Streptomyces clavuligerus.